Here is a 94-residue protein sequence, read N- to C-terminus: uncharacterized protein (94 aa).

This is an uncharacterized protein from Rickettsia prowazekii (strain Madrid E).